The primary structure comprises 90 residues: Small ribosomal subunit protein bS16 (90 aa).

The protein belongs to the bacterial ribosomal protein bS16 family.

This chain is Small ribosomal subunit protein bS16, found in Streptococcus sanguinis (strain SK36).